Reading from the N-terminus, the 274-residue chain is ATP synthase subunit a (274 aa).

5 helical membrane passes run 43–63 (TLNIDSLFFSVVLGLAFLLVF), 103–123 (VIAPLALTVFVWVLLMNMMDL), 149–169 (DVSITLSMALGVFILIIFYSI), 223–243 (LIFILIAGLLPWWSQWMLSVP), and 245–265 (AIFHILIITLQAFIFMVLTIV).

It belongs to the ATPase A chain family. As to quaternary structure, F-type ATPases have 2 components, CF(1) - the catalytic core - and CF(0) - the membrane proton channel. CF(1) has five subunits: alpha(3), beta(3), gamma(1), delta(1), epsilon(1). CF(0) has three main subunits: a(1), b(2) and c(9-12). The alpha and beta chains form an alternating ring which encloses part of the gamma chain. CF(1) is attached to CF(0) by a central stalk formed by the gamma and epsilon chains, while a peripheral stalk is formed by the delta and b chains.

It localises to the cell inner membrane. Key component of the proton channel; it plays a direct role in the translocation of protons across the membrane. This Yersinia pestis bv. Antiqua (strain Angola) protein is ATP synthase subunit a.